We begin with the raw amino-acid sequence, 595 residues long: Mitoguardin 1 (595 aa).

2 helical membrane-spanning segments follow: residues 11 to 31 (LPIK…YYSL) and 38 to 58 (TGTK…IIIA).

Belongs to the mitoguardin family. In terms of assembly, homodimer and heterodimer; forms heterodimers with miga2.

The protein resides in the mitochondrion outer membrane. Its function is as follows. Regulator of mitochondrial fusion: acts by forming homo- and heterodimers at the mitochondrial outer membrane and facilitating the formation of pld6/MitoPLD dimers. May act by regulating phospholipid metabolism via pld6/MitoPLD. The protein is Mitoguardin 1 of Danio rerio (Zebrafish).